The sequence spans 184 residues: MITAVRAVPFRVGIGYDVHGFADSPPENGHIVLCGVEIAFHRKIKAHSDGDVGTHALVDALLGCVGEGSIGEHFPNTDPRWENMSSTHFLLEAQSKALAKGYAVLNFDLTIVCELPKIIPHVPKMKLFMSKLLGMDASAINIKAVTTEKLGFIGRGEGIAAHAVVLCRKVTAAAPNPGSENPRG.

A divalent metal cation is bound by residues Asp-17 and His-19. 4-CDP-2-C-methyl-D-erythritol 2-phosphate is bound by residues 17-19 (DVH) and 47-48 (HS). Residue His-55 participates in a divalent metal cation binding. 4-CDP-2-C-methyl-D-erythritol 2-phosphate contacts are provided by residues 74–78 (FPNTD), Phe-152, and Arg-155.

This sequence belongs to the IspF family. As to quaternary structure, homotrimer. A divalent metal cation is required as a cofactor.

It carries out the reaction 4-CDP-2-C-methyl-D-erythritol 2-phosphate = 2-C-methyl-D-erythritol 2,4-cyclic diphosphate + CMP. It participates in isoprenoid biosynthesis; isopentenyl diphosphate biosynthesis via DXP pathway; isopentenyl diphosphate from 1-deoxy-D-xylulose 5-phosphate: step 4/6. Its function is as follows. Involved in the biosynthesis of isopentenyl diphosphate (IPP) and dimethylallyl diphosphate (DMAPP), two major building blocks of isoprenoid compounds. Catalyzes the conversion of 4-diphosphocytidyl-2-C-methyl-D-erythritol 2-phosphate (CDP-ME2P) to 2-C-methyl-D-erythritol 2,4-cyclodiphosphate (ME-CPP) with a corresponding release of cytidine 5-monophosphate (CMP). This is 2-C-methyl-D-erythritol 2,4-cyclodiphosphate synthase from Anaplasma marginale (strain St. Maries).